Here is a 276-residue protein sequence, read N- to C-terminus: MPEMPEVETVRRTLTPLVKGKTIAKIIIWYPKIIVNNPDEFVEKLTNKKILKIDRYGKYLLFRFSDDLTMVSHLRMEGKYHLVTPDHPKGKHEHVEFVFTDGTALRYADVRKFGRMHLVETGTEKQTTGIRHLGPEPNTEEFSVEYFINALSRKKKNIKNTLLDQTVVCGLGNIYVDEVLWQSKIHPLSSAKSIPADKIVDLYHNINHTITVATKERGTTVHTYLDANGDIGGYQNMLQVYGHAGEECNNCGTILEKIKVNGRGTTFCPHCQVLYK.

P2 serves as the catalytic Schiff-base intermediate with DNA. Residue E3 is the Proton donor of the active site. K58 (proton donor; for beta-elimination activity) is an active-site residue. DNA is bound by residues H92, R111, and K154. An FPG-type zinc finger spans residues 239–273 (QVYGHAGEECNNCGTILEKIKVNGRGTTFCPHCQV). Residue R263 is the Proton donor; for delta-elimination activity of the active site.

Belongs to the FPG family. As to quaternary structure, monomer. Zn(2+) is required as a cofactor.

It carries out the reaction Hydrolysis of DNA containing ring-opened 7-methylguanine residues, releasing 2,6-diamino-4-hydroxy-5-(N-methyl)formamidopyrimidine.. The catalysed reaction is 2'-deoxyribonucleotide-(2'-deoxyribose 5'-phosphate)-2'-deoxyribonucleotide-DNA = a 3'-end 2'-deoxyribonucleotide-(2,3-dehydro-2,3-deoxyribose 5'-phosphate)-DNA + a 5'-end 5'-phospho-2'-deoxyribonucleoside-DNA + H(+). Its function is as follows. Involved in base excision repair of DNA damaged by oxidation or by mutagenic agents. Acts as a DNA glycosylase that recognizes and removes damaged bases. Has a preference for oxidized purines, such as 7,8-dihydro-8-oxoguanine (8-oxoG). Has AP (apurinic/apyrimidinic) lyase activity and introduces nicks in the DNA strand. Cleaves the DNA backbone by beta-delta elimination to generate a single-strand break at the site of the removed base with both 3'- and 5'-phosphates. The polypeptide is Formamidopyrimidine-DNA glycosylase (Lactobacillus johnsonii (strain CNCM I-12250 / La1 / NCC 533)).